Here is a 351-residue protein sequence, read N- to C-terminus: ATP-dependent 6-phosphofructokinase subunit gamma (351 aa).

Heterododecamer of 4 alpha, 4 beta and 4 gamma chains. The gamma chain bridges the N-terminal halves of the alpha and beta subunits.

It is found in the cytoplasm. The protein operates within carbohydrate degradation; glycolysis; D-glyceraldehyde 3-phosphate and glycerone phosphate from D-glucose: step 3/4. Functionally, structural subunit of pyrophosphate--fructose 6-phosphate 1-phosphotransferase. Not required for catalytic activity. Fine-tunes allosteric regulation of the ATP-PFK by ATP, fructose 2,6-bisphosphate and AMP. The protein is ATP-dependent 6-phosphofructokinase subunit gamma (PFK3) of Komagataella phaffii (strain GS115 / ATCC 20864) (Yeast).